A 292-amino-acid chain; its full sequence is Large ribosomal subunit protein uL18 (292 aa).

This sequence belongs to the universal ribosomal protein uL18 family. In terms of assembly, component of the large ribosomal subunit (LSU).

The protein localises to the cytoplasm. The protein resides in the nucleus. Its function is as follows. Component of the ribosome, a large ribonucleoprotein complex responsible for the synthesis of proteins in the cell. The small ribosomal subunit (SSU) binds messenger RNAs (mRNAs) and translates the encoded message by selecting cognate aminoacyl-transfer RNA (tRNA) molecules. The large subunit (LSU) contains the ribosomal catalytic site termed the peptidyl transferase center (PTC), which catalyzes the formation of peptide bonds, thereby polymerizing the amino acids delivered by tRNAs into a polypeptide chain. The nascent polypeptides leave the ribosome through a tunnel in the LSU and interact with protein factors that function in enzymatic processing, targeting, and the membrane insertion of nascent chains at the exit of the ribosomal tunnel. In Dictyostelium discoideum (Social amoeba), this protein is Large ribosomal subunit protein uL18 (rpl5).